The sequence spans 425 residues: Sucrose-phosphatase 1 (425 aa).

This sequence belongs to the sucrose phosphatase family. In terms of assembly, homodimer. The cofactor is Mg(2+).

The catalysed reaction is sucrose 6(F)-phosphate + H2O = sucrose + phosphate. The protein operates within glycan biosynthesis; sucrose biosynthesis; sucrose from D-fructose 6-phosphate and UDP-alpha-D-glucose: step 2/2. With respect to regulation, inhibited by EDTA. Its function is as follows. Catalyzes the final step of sucrose synthesis. The sequence is that of Sucrose-phosphatase 1 (SPP1) from Nicotiana tabacum (Common tobacco).